We begin with the raw amino-acid sequence, 87 residues long: uncharacterized protein (87 aa).

It belongs to the SF3B5 family.

This is an uncharacterized protein from Arabidopsis thaliana (Mouse-ear cress).